A 79-amino-acid polypeptide reads, in one-letter code: Small ribosomal subunit protein bS18 (79 aa).

It belongs to the bacterial ribosomal protein bS18 family. As to quaternary structure, part of the 30S ribosomal subunit. Forms a tight heterodimer with protein bS6.

In terms of biological role, binds as a heterodimer with protein bS6 to the central domain of the 16S rRNA, where it helps stabilize the platform of the 30S subunit. The protein is Small ribosomal subunit protein bS18 of Blochmanniella pennsylvanica (strain BPEN).